A 458-amino-acid polypeptide reads, in one-letter code: uncharacterized protein (458 aa).

This sequence belongs to the MG032/MG096/MG288 family.

This is an uncharacterized protein from Mycoplasma pneumoniae (strain ATCC 29342 / M129 / Subtype 1) (Mycoplasmoides pneumoniae).